We begin with the raw amino-acid sequence, 316 residues long: ATP synthase gamma chain (316 aa).

The protein belongs to the ATPase gamma chain family. As to quaternary structure, F-type ATPases have 2 components, CF(1) - the catalytic core - and CF(0) - the membrane proton channel. CF(1) has five subunits: alpha(3), beta(3), gamma(1), delta(1), epsilon(1). CF(0) has three main subunits: a, b and c.

Its subcellular location is the cellular thylakoid membrane. In terms of biological role, produces ATP from ADP in the presence of a proton gradient across the membrane. The gamma chain is believed to be important in regulating ATPase activity and the flow of protons through the CF(0) complex. The sequence is that of ATP synthase gamma chain from Synechococcus sp. (strain ATCC 27144 / PCC 6301 / SAUG 1402/1) (Anacystis nidulans).